Reading from the N-terminus, the 107-residue chain is Ig kappa chain V-VI region XRPC 44 (107 aa).

Residues 1 to 23 are framework-1; it reads EIVLTQSPAITAASLGQKVTITC. A disulfide bridge links C23 with C87. The interval 24 to 33 is complementarity-determining-1; the sequence is SASSSVSYMH. Residues 34–48 are framework-2; the sequence is WYQQKSGTSPKPWIY. Positions 49-55 are complementarity-determining-2; it reads EISKLAS. A framework-3 region spans residues 56–87; the sequence is GVPARFSGSGSGTSYSLTISSMEAEDAAIYYC. The complementarity-determining-3 stretch occupies residues 88-96; sequence QQWNYPLWT. Positions 97-106 are framework-4; the sequence is FGGGTKLEIK.

In Mus musculus (Mouse), this protein is Ig kappa chain V-VI region XRPC 44.